The sequence spans 173 residues: Flavodoxin 2 (173 aa).

In terms of domain architecture, Flavodoxin-like spans 3–165 (MGLFYGSSTC…RIQSWCEQIL (163 aa)).

The protein belongs to the flavodoxin family. FMN serves as cofactor.

Low-potential electron donor to a number of redox enzymes. This chain is Flavodoxin 2 (fldB), found in Escherichia coli O157:H7.